A 177-amino-acid chain; its full sequence is Small ribosomal subunit protein bS16 (177 aa).

The tract at residues 80–177 (GIIAMPANGS…AAEAPKEEAK (98 aa)) is disordered. The segment covering 107 to 122 (AAPAAAPKAEAAPAAE) has biased composition (low complexity).

This sequence belongs to the bacterial ribosomal protein bS16 family.

The sequence is that of Small ribosomal subunit protein bS16 from Pelagibacter ubique (strain HTCC1062).